We begin with the raw amino-acid sequence, 980 residues long: Glutamate receptor ionotropic, kainate 5 (980 aa).

Residues 1 to 14 form the signal peptide; the sequence is MPAELLLLLIVAFA. Residues 15-544 lie on the Extracellular side of the membrane; it reads SPSCQVLSSL…YFSFLDPFSP (530 aa). 3 cysteine pairs are disulfide-bonded: Cys36/Cys292, Cys83/Cys334, and Cys165/Cys170. Asn219, Asn271, Asn285, Asn322, Asn372, Asn394, Asn400, Asn407, Asn414, and Asn478 each carry an N-linked (GlcNAc...) asparagine glycan. A helical membrane pass occupies residues 545 to 565; that stretch reads AVWLFMLLAYLAVSCVLFLAA. The Cytoplasmic portion of the chain corresponds to 566 to 622; sequence RLSPYEWYNPHPCLRARPHILENQYTLGNSLWFPVGGFMQQGSEIMPRALSTRCVSG. The chain crosses the membrane as a helical span at residues 623–643; that stretch reads VWWAFTLIIISSYTANLAAFL. At 644-803 the chain is on the extracellular side; sequence TVQRMEVPVE…HRAKGLGMEN (160 aa). A glycan (N-linked (GlcNAc...) asparagine) is linked at Asn735. The helical transmembrane segment at 804-824 threads the bilayer; that stretch reads IGGIFIVLICGLIIAVFVAVM. Residues 825 to 980 are Cytoplasmic-facing; sequence EFIWSTRRSA…AGPRELAEHE (156 aa). Disordered regions lie at residues 891-927 and 944-980; these read YSAG…PTPC and ASGA…AEHE. The segment covering 894 to 903 has biased composition (gly residues); the sequence is GAGGDAGSAH.

This sequence belongs to the glutamate-gated ion channel (TC 1.A.10.1) family. GRIK5 subfamily. Homotetramer. Heterotetramer with GRIK2. Can form functional heteromeric receptors with GRIK1 and GRIK2. Can form functional heteromeric receptors with GRIK3.

Its subcellular location is the cell membrane. The protein localises to the postsynaptic cell membrane. The protein resides in the presynaptic cell membrane. Ionotropic glutamate receptor that functions as a cation-permeable ligand-gated ion channel, gated by L-glutamate and the glutamatergic agonist kainic acid. Cannot form functional channels on its own and produces channel activity only in heteromeric assembly with GRIK1 and GRIK2 subunits. Can form functional heteromeric receptors with GRIK3. The polypeptide is Glutamate receptor ionotropic, kainate 5 (GRIK5) (Homo sapiens (Human)).